Reading from the N-terminus, the 271-residue chain is Phosphatidylinositol transfer protein beta isoform (271 aa).

The residue at position 215 (K215) is an N6-acetyllysine. Phosphoserine; by PKC is present on S262.

It belongs to the PtdIns transfer protein family. PI transfer class I subfamily. In terms of processing, constitutive phosphorylation of Ser-262 has no effect on phospholipid transfer activity but is required for Golgi targeting.

The protein resides in the golgi apparatus. It is found in the golgi apparatus membrane. It localises to the endoplasmic reticulum membrane. It carries out the reaction a 1,2-diacyl-sn-glycero-3-phosphocholine(in) = a 1,2-diacyl-sn-glycero-3-phosphocholine(out). It catalyses the reaction a 1,2-diacyl-sn-glycero-3-phospho-(1D-myo-inositol)(in) = a 1,2-diacyl-sn-glycero-3-phospho-(1D-myo-inositol)(out). The catalysed reaction is an N-(acyl)-sphingosylphosphocholine(in) = an N-(acyl)-sphingosylphosphocholine(out). Functionally, catalyzes the transfer of phosphatidylinositol, phosphatidylcholine and sphingomyelin between membranes. Required for COPI-mediated retrograde transport from the Golgi to the endoplasmic reticulum; phosphatidylinositol and phosphatidylcholine transfer activity is essential for this function. The protein is Phosphatidylinositol transfer protein beta isoform (Pitpnb) of Mus musculus (Mouse).